Here is a 155-residue protein sequence, read N- to C-terminus: SsrA-binding protein (155 aa).

Belongs to the SmpB family.

It is found in the cytoplasm. Required for rescue of stalled ribosomes mediated by trans-translation. Binds to transfer-messenger RNA (tmRNA), required for stable association of tmRNA with ribosomes. tmRNA and SmpB together mimic tRNA shape, replacing the anticodon stem-loop with SmpB. tmRNA is encoded by the ssrA gene; the 2 termini fold to resemble tRNA(Ala) and it encodes a 'tag peptide', a short internal open reading frame. During trans-translation Ala-aminoacylated tmRNA acts like a tRNA, entering the A-site of stalled ribosomes, displacing the stalled mRNA. The ribosome then switches to translate the ORF on the tmRNA; the nascent peptide is terminated with the 'tag peptide' encoded by the tmRNA and targeted for degradation. The ribosome is freed to recommence translation, which seems to be the essential function of trans-translation. In Streptococcus uberis (strain ATCC BAA-854 / 0140J), this protein is SsrA-binding protein.